Here is a 100-residue protein sequence, read N- to C-terminus: Urease subunit gamma (100 aa).

It belongs to the urease gamma subunit family. Heterotrimer of UreA (gamma), UreB (beta) and UreC (alpha) subunits. Three heterotrimers associate to form the active enzyme.

The protein resides in the cytoplasm. It catalyses the reaction urea + 2 H2O + H(+) = hydrogencarbonate + 2 NH4(+). It functions in the pathway nitrogen metabolism; urea degradation; CO(2) and NH(3) from urea (urease route): step 1/1. The protein is Urease subunit gamma of Staphylococcus epidermidis (strain ATCC 35984 / DSM 28319 / BCRC 17069 / CCUG 31568 / BM 3577 / RP62A).